We begin with the raw amino-acid sequence, 356 residues long: GMP reductase (356 aa).

Residues 26–27 (SR), lysine 78, 132–134 (DVA), and 183–184 (IG) each bind NADP(+). Glycine 184, glycine 186, and cysteine 189 together coordinate K(+). The active-site Thioimidate intermediate is cysteine 189. Threonine 191 serves as the catalytic Proton donor/acceptor. Residue arginine 192 coordinates K(+). Residues 222–224 (DGG), 245–246 (GG), 271–273 (GMS), and 289–293 (RASEG) each bind GMP. Residues methionine 272, 288–289 (YR), and 317–320 (SACT) each bind NADP(+).

This sequence belongs to the IMPDH/GMPR family.

It carries out the reaction IMP + NH4(+) + NADP(+) = GMP + NADPH + 2 H(+). Its function is as follows. Catalyzes the irreversible NADPH-dependent deamination of GMP to IMP. It functions in the conversion of nucleobase, nucleoside and nucleotide derivatives of G to A nucleotides, and in maintaining the intracellular balance of A and G nucleotides. This is GMP reductase from Ascaris suum (Pig roundworm).